We begin with the raw amino-acid sequence, 154 residues long: Putative lipoprotein MAB_4074c (154 aa).

An N-terminal signal peptide occupies residues 1 to 21 (MMNRVIVGAMGLLAAGAVVVG). C22 carries the N-palmitoyl cysteine lipid modification. The S-diacylglycerol cysteine moiety is linked to residue C22.

The protein belongs to the mycobacterial 19 kDa antigen family.

It localises to the cell membrane. This Mycobacteroides abscessus (strain ATCC 19977 / DSM 44196 / CCUG 20993 / CIP 104536 / JCM 13569 / NCTC 13031 / TMC 1543 / L948) (Mycobacterium abscessus) protein is Putative lipoprotein MAB_4074c.